A 602-amino-acid chain; its full sequence is Elongation factor 4 (602 aa).

In terms of domain architecture, tr-type G spans 6–188 (KYIRNFCIIA…AIIRRVPPPR (183 aa)). Residues 18 to 23 (DHGKST) and 135 to 138 (NKID) contribute to the GTP site.

This sequence belongs to the TRAFAC class translation factor GTPase superfamily. Classic translation factor GTPase family. LepA subfamily.

Its subcellular location is the cell membrane. It catalyses the reaction GTP + H2O = GDP + phosphate + H(+). In terms of biological role, required for accurate and efficient protein synthesis under certain stress conditions. May act as a fidelity factor of the translation reaction, by catalyzing a one-codon backward translocation of tRNAs on improperly translocated ribosomes. Back-translocation proceeds from a post-translocation (POST) complex to a pre-translocation (PRE) complex, thus giving elongation factor G a second chance to translocate the tRNAs correctly. Binds to ribosomes in a GTP-dependent manner. The polypeptide is Elongation factor 4 (Moorella thermoacetica (strain ATCC 39073 / JCM 9320)).